The chain runs to 575 residues: Proline--tRNA ligase (575 aa).

It belongs to the class-II aminoacyl-tRNA synthetase family. ProS type 1 subfamily. In terms of assembly, homodimer.

The protein resides in the cytoplasm. The catalysed reaction is tRNA(Pro) + L-proline + ATP = L-prolyl-tRNA(Pro) + AMP + diphosphate. In terms of biological role, catalyzes the attachment of proline to tRNA(Pro) in a two-step reaction: proline is first activated by ATP to form Pro-AMP and then transferred to the acceptor end of tRNA(Pro). As ProRS can inadvertently accommodate and process non-cognate amino acids such as alanine and cysteine, to avoid such errors it has two additional distinct editing activities against alanine. One activity is designated as 'pretransfer' editing and involves the tRNA(Pro)-independent hydrolysis of activated Ala-AMP. The other activity is designated 'posttransfer' editing and involves deacylation of mischarged Ala-tRNA(Pro). The misacylated Cys-tRNA(Pro) is not edited by ProRS. This chain is Proline--tRNA ligase, found in Heliobacterium modesticaldum (strain ATCC 51547 / Ice1).